The chain runs to 262 residues: Ribosomal RNA small subunit methyltransferase A (262 aa).

The S-adenosyl-L-methionine site is built by Asn12, Leu14, Gly38, Glu60, Asp83, and Asn102.

This sequence belongs to the class I-like SAM-binding methyltransferase superfamily. rRNA adenine N(6)-methyltransferase family. RsmA subfamily.

It localises to the cytoplasm. The catalysed reaction is adenosine(1518)/adenosine(1519) in 16S rRNA + 4 S-adenosyl-L-methionine = N(6)-dimethyladenosine(1518)/N(6)-dimethyladenosine(1519) in 16S rRNA + 4 S-adenosyl-L-homocysteine + 4 H(+). Specifically dimethylates two adjacent adenosines (A1518 and A1519) in the loop of a conserved hairpin near the 3'-end of 16S rRNA in the 30S particle. May play a critical role in biogenesis of 30S subunits. The sequence is that of Ribosomal RNA small subunit methyltransferase A from Pelagibacter ubique (strain HTCC1062).